A 476-amino-acid chain; its full sequence is Ureidoglycolate hydrolase (476 aa).

Positions 1–25 (MESLKRFLCSIALLLISLLLPSSLA) are cleaved as a signal peptide. The Mn(2+) site is built by His-138, Asp-149, Glu-184, and His-254. Substrate is bound by residues 183 to 184 (EE), 254 to 257 (HIEQ), His-290, Asn-340, Arg-353, 423 to 424 (YH), and His-448. The involved in dimerization stretch occupies residues 276–391 (APASLKVEFE…LSEFKIVNQD (116 aa)). Residue His-448 participates in Mn(2+) binding.

The protein belongs to the peptidase M20 family. As to quaternary structure, homodimer. Mn(2+) serves as cofactor. Ni(2+) is required as a cofactor. It depends on Co(2+) as a cofactor.

The protein localises to the endoplasmic reticulum. The catalysed reaction is (S)-ureidoglycolate + H2O + 2 H(+) = glyoxylate + 2 NH4(+) + CO2. It functions in the pathway nitrogen metabolism; (S)-allantoin degradation; glyoxylate from (S)-ureidoglycolate: step 1/1. Involved in the catabolism of purine nucleotides. Can use (S)-ureidoglycolate as substrate, but not (R)-ureidoglycolate or allantoate. The sequential activity of AAH, UGLYAH and UAH allows a complete purine breakdown without the intermediate generation of urea. This Arabidopsis thaliana (Mouse-ear cress) protein is Ureidoglycolate hydrolase.